The following is a 193-amino-acid chain: Putative 3-methyladenine DNA glycosylase (193 aa).

The protein belongs to the DNA glycosylase MPG family.

This Francisella tularensis subsp. holarctica (strain FTNF002-00 / FTA) protein is Putative 3-methyladenine DNA glycosylase.